A 471-amino-acid polypeptide reads, in one-letter code: Ribulose bisphosphate carboxylase large chain (471 aa).

2 residues coordinate substrate: asparagine 115 and threonine 165. Lysine 167 acts as the Proton acceptor in catalysis. Lysine 169 is a binding site for substrate. Mg(2+)-binding residues include lysine 193, aspartate 195, and glutamate 196. Lysine 193 bears the N6-carboxylysine mark. The active-site Proton acceptor is the histidine 286. 3 residues coordinate substrate: arginine 287, histidine 319, and serine 371.

The protein belongs to the RuBisCO large chain family. Type I subfamily. As to quaternary structure, heterohexadecamer of 8 large chains and 8 small chains. Forms a CsoS2-CsoS1-RuBisCO complex. It depends on Mg(2+) as a cofactor.

It localises to the carboxysome. The enzyme catalyses 2 (2R)-3-phosphoglycerate + 2 H(+) = D-ribulose 1,5-bisphosphate + CO2 + H2O. It catalyses the reaction D-ribulose 1,5-bisphosphate + O2 = 2-phosphoglycolate + (2R)-3-phosphoglycerate + 2 H(+). In terms of biological role, ruBisCO catalyzes two reactions: the carboxylation of D-ribulose 1,5-bisphosphate, the primary event in carbon dioxide fixation, as well as the oxidative fragmentation of the pentose substrate in the photorespiration process. Both reactions occur simultaneously and in competition at the same active site. This Parasynechococcus marenigrum (strain WH8102) protein is Ribulose bisphosphate carboxylase large chain.